The following is a 208-amino-acid chain: Large ribosomal subunit protein uL4 (208 aa).

The disordered stretch occupies residues 45-89 (RQGTHAHKNRSAVSGGGKKPWRQKGTGRARQGSTRSPQWRGGGTV).

The protein belongs to the universal ribosomal protein uL4 family. Part of the 50S ribosomal subunit.

In terms of biological role, one of the primary rRNA binding proteins, this protein initially binds near the 5'-end of the 23S rRNA. It is important during the early stages of 50S assembly. It makes multiple contacts with different domains of the 23S rRNA in the assembled 50S subunit and ribosome. Its function is as follows. Forms part of the polypeptide exit tunnel. The protein is Large ribosomal subunit protein uL4 of Lactococcus lactis subsp. lactis (strain IL1403) (Streptococcus lactis).